The following is a 515-amino-acid chain: Serine/threonine-protein phosphatase PP-Z (515 aa).

The disordered stretch occupies residues 1 to 186; sequence MGQGSSKHAD…SSTDPDDPET (186 aa). Positions 17 to 30 are enriched in polar residues; that stretch reads PSFSRSDTQGSIKS. Ser18 carries the phosphoserine modification. A compositionally biased stretch (basic and acidic residues) spans 40–51; sequence KGKDSNHDRRTS. Over residues 63-74 the composition is skewed to pro residues; it reads ETPPSLPPPPSP. The span at 91–109 shows a compositional bias: polar residues; the sequence is DSGNSSQSPTSPHPSNQPA. Positions 126–143 are enriched in low complexity; that stretch reads SSSSYAVSPTSPTSPTSS. Residues Asp248, His250, Asp276, and Asn308 each contribute to the Mn(2+) site. His309 serves as the catalytic Proton donor. Residues His357 and His432 each contribute to the Mn(2+) site. Ser505 and Ser514 each carry phosphoserine.

This sequence belongs to the PPP phosphatase family. PP-Z subfamily. It depends on Mn(2+) as a cofactor.

The protein resides in the cytoplasm. The enzyme catalyses O-phospho-L-seryl-[protein] + H2O = L-seryl-[protein] + phosphate. It carries out the reaction O-phospho-L-threonyl-[protein] + H2O = L-threonyl-[protein] + phosphate. The protein is Serine/threonine-protein phosphatase PP-Z (pzh1) of Schizosaccharomyces pombe (strain 972 / ATCC 24843) (Fission yeast).